The chain runs to 956 residues: Bifunctional glutamine synthetase adenylyltransferase/adenylyl-removing enzyme (956 aa).

Residues 1–450 (MENMSEQALP…YFKETVGGQE (450 aa)) form an adenylyl removase region. Positions 456–956 (EQWTAQLWSL…IYEQVLNNGQ (501 aa)) are adenylyl transferase.

Belongs to the GlnE family. Requires Mg(2+) as cofactor.

The catalysed reaction is [glutamine synthetase]-O(4)-(5'-adenylyl)-L-tyrosine + phosphate = [glutamine synthetase]-L-tyrosine + ADP. It carries out the reaction [glutamine synthetase]-L-tyrosine + ATP = [glutamine synthetase]-O(4)-(5'-adenylyl)-L-tyrosine + diphosphate. Functionally, involved in the regulation of glutamine synthetase GlnA, a key enzyme in the process to assimilate ammonia. When cellular nitrogen levels are high, the C-terminal adenylyl transferase (AT) inactivates GlnA by covalent transfer of an adenylyl group from ATP to specific tyrosine residue of GlnA, thus reducing its activity. Conversely, when nitrogen levels are low, the N-terminal adenylyl removase (AR) activates GlnA by removing the adenylyl group by phosphorolysis, increasing its activity. The regulatory region of GlnE binds the signal transduction protein PII (GlnB) which indicates the nitrogen status of the cell. The chain is Bifunctional glutamine synthetase adenylyltransferase/adenylyl-removing enzyme from Shewanella loihica (strain ATCC BAA-1088 / PV-4).